Reading from the N-terminus, the 164-residue chain is CASP-like protein 1C1 (164 aa).

Residues 1-7 (MVKLTKR) are Cytoplasmic-facing. Residues 8–28 (IGGLVLRLAAFGAALAALIVM) traverse the membrane as a helical segment. Topologically, residues 29 to 51 (ITSRERASFLAISLEAKYTDMAA) are extracellular. A helical transmembrane segment spans residues 52 to 72 (FKYFVIANAVVSVYSFLVLFL). Over 73–80 (PKESLLWK) the chain is Cytoplasmic. Residues 81-101 (FVVVLDLVMTMLLTSSLSAAL) traverse the membrane as a helical segment. The Extracellular segment spans residues 102–129 (AVAQVGKKGNANAGWLPICGQVPKFCDQ). A helical membrane pass occupies residues 130 to 150 (ITGALIAGFVALVLYVLLLLY). Residues 151–164 (SLHAVVDPFLLQKS) are Cytoplasmic-facing.

This sequence belongs to the Casparian strip membrane proteins (CASP) family. As to quaternary structure, homodimer and heterodimers. In terms of tissue distribution, expressed in the stele of the root.

It localises to the cell membrane. The polypeptide is CASP-like protein 1C1 (Arabidopsis thaliana (Mouse-ear cress)).